The sequence spans 436 residues: Putative actin-fragmin kinase DDB_G0268748 (436 aa).

The disordered stretch occupies residues 14–58 (DKNIDSGSSSSNIGGSSSNSSGTTNKRSSGNFNGSSASSSPSSST). The span at 18–57 (DSGSSSSNIGGSSSNSSGTTNKRSSGNFNGSSASSSPSSS) shows a compositional bias: low complexity.

Belongs to the protein kinase superfamily. AFK Ser/Thr protein kinase family.

This chain is Putative actin-fragmin kinase DDB_G0268748, found in Dictyostelium discoideum (Social amoeba).